A 190-amino-acid polypeptide reads, in one-letter code: Probable DNA replication complex GINS protein PSF2 (190 aa).

Belongs to the GINS2/PSF2 family. Component of the GINS complex which is a heterotetramer of gins1, gins2, gins3 and gins4.

Its subcellular location is the nucleus. Its function is as follows. The GINS complex plays an essential role in the initiation of DNA replication. This Brugia malayi (Filarial nematode worm) protein is Probable DNA replication complex GINS protein PSF2.